A 317-amino-acid chain; its full sequence is Integrin-binding sialoprotein (317 aa).

Positions 1–16 (MKTALILLSILGMACA) are cleaved as a signal peptide. Phosphoserine is present on residues Ser31, Ser67, Ser74, Ser75, Ser94, and Ser100. A disordered region spans residues 58–254 (FPVQGSSDSS…RTTSPPFGKT (197 aa)). Residues 66–102 (SSEENGDDSSEEEEEEEETSNEGENNEESNEDEDSEA) are compositionally biased toward acidic residues. Asn104 carries N-linked (GlcNAc...) asparagine glycosylation. Thr119 and Thr122 each carry an O-linked (GalNAc...) threonine glycan. A Phosphoserine modification is found at Ser149. Residues 149-173 (SDEEEEEEEEGNENEESEAEVDENE) show a composition bias toward acidic residues. Asn177, Asn182, and Asn190 each carry an N-linked (GlcNAc...) asparagine glycan. The span at 222 to 232 (KGTSKTTTSPN) shows a compositional bias: polar residues. O-linked (GalNAc...) threonine glycosylation is found at Thr227, Thr228, Thr229, Thr238, and Thr239. A Phosphoserine modification is found at Ser280. Positions 286–288 (RGD) match the Integrin-binding motif motif. A sulfotyrosine mark is found at Tyr313 and Tyr314.

As to quaternary structure, monomer. Interacts with integrins; the interaction promotes cell adhesion. In terms of processing, N-glycosylated; glycans consist of sialylated and core-fucosylated bi-, tri- and tetraantennary chains. Post-translationally, O-glycosylated at eight sites; mucin-type glycans contain Gal, GlcNAc, GalNAc and terminal NeuAc. As to expression, expressed in bone (at protein level). Expressed in trophoblast cells of placenta (at protein level). Expressed in brain.

It is found in the secreted. Functionally, binds tightly to hydroxyapatite. Appears to form an integral part of the mineralized matrix. Probably important to cell-matrix interaction. Promotes adhesion and migration of various cells via the alpha-V/beta-3 integrin receptor (ITGAV:ITGB3). The polypeptide is Integrin-binding sialoprotein (IBSP) (Homo sapiens (Human)).